Reading from the N-terminus, the 172-residue chain is Myosin regulatory light chain (172 aa).

Threonine 17 is subject to Phosphothreonine. Residue serine 18 is modified to Phosphoserine. EF-hand domains follow at residues 27 to 62, 98 to 133, and 134 to 168; these read AQIQ…LGKE, DPEE…MGER, and YSEE…GTKD. The Ca(2+) site is built by aspartate 40, asparagine 42, aspartate 44, and aspartate 51.

Myosin is a hexamer of 2 heavy chains and 4 light chains (two regulatory light chains and two essential light chains). Post-translationally, may be phosphorylated by let-502 or/and pak-1 and dephosphorylated by mel-11 to regulate its activation and myosin II-mediated contraction. As to expression, expressed in the spermathecal and uterine walls. Weak expression in gonadal sheath and intestinal muscle. Not detected in vulval, pharyngeal or body wall muscles.

It localises to the cytoplasm. It is found in the cytoskeleton. Functionally, regulates myosin II activity and organization during embryo elongation. May be involved in the organization of mlc-5 into bundles. Required maternally for cytokinesis during meiosis and mitosis in the early embryo and for the establishment of embryonic anterior-posterior polarity. This chain is Myosin regulatory light chain, found in Caenorhabditis elegans.